Here is a 427-residue protein sequence, read N- to C-terminus: MEAYIRQKRATPGMVQASDLQLVRPMSAVNRNGREVHAYDGPMQFMMSPSNPDQIISSSGSPTTVTATGTGTTTTTGSVTTTPTSPYSDATLEKLTPSSQDSEDEESTPVDILPSSNSFDRHSDGHLTHSAPISPALNNNVSRDSQQDSGSSGNLKSMEHSSPQASGHNDAEGDVAGPIEQWVTQPAAQGVLYKCRITRDRKGMDRGLFPIYYLHLERDYGKRLFCLAGRKRKKSKTSNYIISCDPTDLSRQADGFVGKLRSNVFGTTFFVYDNGKKDDPVSPRLDLAVVIYDTNILGFKGPRNMTVLLPGMTEDDQRVKINSSDSHGQGLLDSWKSKHMDNVVELHNKTPIWNDETQSYVLNFHGRVTQASVKNFQLVHDSDPDYIVMQFGRTSDDIFTMDFRYPLCAFQAFAIALSSFDGKLACE.

Residues 48-174 (SPSNPDQIIS…ASGHNDAEGD (127 aa)) are disordered. The segment covering 57–86 (SSSGSPTTVTATGTGTTTTTGSVTTTPTSP) has biased composition (low complexity).

It belongs to the TUB family.

The protein localises to the cytoplasm. The protein resides in the nucleus. In Culex quinquefasciatus (Southern house mosquito), this protein is Protein king tubby 1 (king-tubby1).